A 191-amino-acid chain; its full sequence is MEYFDMRKMSVNLWRNAAGETREICTFPPAKRDFYWRASIASIAANGEFSLFPGMERIVTLLEGGEMFLESTDRFNHTLKPLQPFAFAADQVVKAKLTEGQMSMDFNIMTRLDVCKAKVRIAERTFTTFGSRGGVVFVINGAWQLGDKLLTTDQGACWFDGRHTLRLLQPQGKLLFSEINWLAGHSPDQVQ.

The protein belongs to the Ves family.

In Escherichia coli (strain ATCC 8739 / DSM 1576 / NBRC 3972 / NCIMB 8545 / WDCM 00012 / Crooks), this protein is Protein Ves.